A 307-amino-acid polypeptide reads, in one-letter code: Holliday junction branch migration complex subunit RuvB (307 aa).

The large ATPase domain (RuvB-L) stretch occupies residues 1–167 (MKLQIKPPNT…FGVILNINYY (167 aa)). Isoleucine 5, glycine 48, lysine 51, threonine 52, threonine 53, arginine 157, tyrosine 167, and arginine 204 together coordinate ATP. Residue threonine 52 coordinates Mg(2+). The interval 168-233 (SNAEIEKMVS…DLEGLFKNLM (66 aa)) is small ATPAse domain (RuvB-S). The interval 236–307 (KNGLQSIDVQ…NSGREYLVNF (72 aa)) is head domain (RuvB-H). DNA is bound by residues arginine 270, lysine 289, and arginine 294.

It belongs to the RuvB family. Homohexamer. Forms an RuvA(8)-RuvB(12)-Holliday junction (HJ) complex. HJ DNA is sandwiched between 2 RuvA tetramers; dsDNA enters through RuvA and exits via RuvB. An RuvB hexamer assembles on each DNA strand where it exits the tetramer. Each RuvB hexamer is contacted by two RuvA subunits (via domain III) on 2 adjacent RuvB subunits; this complex drives branch migration. In the full resolvosome a probable DNA-RuvA(4)-RuvB(12)-RuvC(2) complex forms which resolves the HJ.

It is found in the cytoplasm. It carries out the reaction ATP + H2O = ADP + phosphate + H(+). Its function is as follows. The RuvA-RuvB-RuvC complex processes Holliday junction (HJ) DNA during genetic recombination and DNA repair, while the RuvA-RuvB complex plays an important role in the rescue of blocked DNA replication forks via replication fork reversal (RFR). RuvA specifically binds to HJ cruciform DNA, conferring on it an open structure. The RuvB hexamer acts as an ATP-dependent pump, pulling dsDNA into and through the RuvAB complex. RuvB forms 2 homohexamers on either side of HJ DNA bound by 1 or 2 RuvA tetramers; 4 subunits per hexamer contact DNA at a time. Coordinated motions by a converter formed by DNA-disengaged RuvB subunits stimulates ATP hydrolysis and nucleotide exchange. Immobilization of the converter enables RuvB to convert the ATP-contained energy into a lever motion, pulling 2 nucleotides of DNA out of the RuvA tetramer per ATP hydrolyzed, thus driving DNA branch migration. The RuvB motors rotate together with the DNA substrate, which together with the progressing nucleotide cycle form the mechanistic basis for DNA recombination by continuous HJ branch migration. Branch migration allows RuvC to scan DNA until it finds its consensus sequence, where it cleaves and resolves cruciform DNA. The protein is Holliday junction branch migration complex subunit RuvB of Mycoplasma genitalium (strain ATCC 33530 / DSM 19775 / NCTC 10195 / G37) (Mycoplasmoides genitalium).